Consider the following 359-residue polypeptide: Hyaluronan and proteoglycan link protein 3 (359 aa).

Residues 1-17 (MSLLFLVLLSPFPCVLG) form the signal peptide. The region spanning 48-164 (KLVVETTEES…ESGLVELELR (117 aa)) is the Ig-like V-type domain. Cystine bridges form between Cys-70–Cys-146, Cys-188–Cys-259, Cys-212–Cys-233, Cys-286–Cys-355, and Cys-311–Cys-332. Link domains follow at residues 166-261 (VVFP…FCFA) and 266-357 (GRVY…YCYV).

This sequence belongs to the HAPLN family.

It localises to the secreted. It is found in the extracellular space. The protein resides in the extracellular matrix. Functionally, may function in hyaluronic acid binding. The sequence is that of Hyaluronan and proteoglycan link protein 3 (Hapln3) from Mus musculus (Mouse).